Reading from the N-terminus, the 310-residue chain is tRNA dimethylallyltransferase (310 aa).

Gly14–Thr21 is a binding site for ATP. Thr16–Thr21 serves as a coordination point for substrate. Interaction with substrate tRNA stretches follow at residues Asp39–Leu42, Gln163–Arg167, and Arg244–Arg249.

It belongs to the IPP transferase family. Monomer. It depends on Mg(2+) as a cofactor.

The catalysed reaction is adenosine(37) in tRNA + dimethylallyl diphosphate = N(6)-dimethylallyladenosine(37) in tRNA + diphosphate. Functionally, catalyzes the transfer of a dimethylallyl group onto the adenine at position 37 in tRNAs that read codons beginning with uridine, leading to the formation of N6-(dimethylallyl)adenosine (i(6)A). In Tolumonas auensis (strain DSM 9187 / NBRC 110442 / TA 4), this protein is tRNA dimethylallyltransferase.